The chain runs to 398 residues: Homeobox protein knotted-1-like 1 (398 aa).

Disordered stretches follow at residues 20–61 (SPIS…HHHQ), 78–102 (NCFR…ASSS), and 241–273 (LNNP…EIDP). Over residues 23–56 (SSSNKNDNTSDTNNNNNNNNSSNYGPGYNNTNNN) the composition is skewed to low complexity. A compositionally biased stretch (polar residues) spans 87-102 (PNNNNNPSVKSEASSS). An ELK domain is found at 279–299 (ELKNHLLKKYSGYLSSLKQEL). Positions 300–363 (SKKKKKGKLP…NQRKRHWKPS (64 aa)) form a DNA-binding region, homeobox; TALE-type.

Belongs to the TALE/KNOX homeobox family. May form heterodimeric complex with the TALE/BELL proteins BEL1, BLH2, BLH8/PNF and BLH9/PNY. Interacts with OFP1, OFP2, OFP4, OFP6 and OFP12. Interacts with CCT7 and CCT8. Interacts with KNATM-B. Binds to AGO10/PNH. Interacts with BZIP30. In terms of tissue distribution, expressed in the vegetative meristem. Present in the base of flower primordia.

The protein localises to the nucleus. Functionally, may play a role in meristem function, and may be involved in maintaining cells in an undifferentiated, meristematic state, and its expression disappears at the same time the shoot apex undergoes the transition from vegetative to reproductive development. Positive regulator of LATERAL ORGAN BOUNDARIES (LOB). Probably binds to the DNA sequence 5'-TGAC-3'. Able to traffic from the L1 to the L2/L3 layers of the meristem, presumably through plasmodesmata. In Arabidopsis thaliana (Mouse-ear cress), this protein is Homeobox protein knotted-1-like 1 (KNAT1).